The chain runs to 51 residues: Sperm protamine P1 (51 aa).

Intrachain disulfides connect Cys-7–Cys-15 and Cys-38–Cys-48.

The protein belongs to the protamine P1 family. In terms of assembly, cross-linked by interchain disulfide bonds around the DNA-helix. Post-translationally, phosphorylated by SRPK1. As to expression, testis.

The protein localises to the nucleus. It is found in the chromosome. Its function is as follows. Protamines substitute for histones in the chromatin of sperm during the haploid phase of spermatogenesis. They compact sperm DNA into a highly condensed, stable and inactive complex. In Mus musculus (Mouse), this protein is Sperm protamine P1 (Prm1).